The primary structure comprises 438 residues: UDP-N-acetylmuramoylalanine--D-glutamate ligase (438 aa).

112 to 118 (GSNGKST) contributes to the ATP binding site.

It belongs to the MurCDEF family.

It is found in the cytoplasm. The catalysed reaction is UDP-N-acetyl-alpha-D-muramoyl-L-alanine + D-glutamate + ATP = UDP-N-acetyl-alpha-D-muramoyl-L-alanyl-D-glutamate + ADP + phosphate + H(+). The protein operates within cell wall biogenesis; peptidoglycan biosynthesis. Cell wall formation. Catalyzes the addition of glutamate to the nucleotide precursor UDP-N-acetylmuramoyl-L-alanine (UMA). The polypeptide is UDP-N-acetylmuramoylalanine--D-glutamate ligase (Yersinia pestis bv. Antiqua (strain Antiqua)).